We begin with the raw amino-acid sequence, 79 residues long: Exodeoxyribonuclease 7 small subunit (79 aa).

The protein belongs to the XseB family. Heterooligomer composed of large and small subunits.

Its subcellular location is the cytoplasm. The catalysed reaction is Exonucleolytic cleavage in either 5'- to 3'- or 3'- to 5'-direction to yield nucleoside 5'-phosphates.. Functionally, bidirectionally degrades single-stranded DNA into large acid-insoluble oligonucleotides, which are then degraded further into small acid-soluble oligonucleotides. This is Exodeoxyribonuclease 7 small subunit from Shouchella clausii (strain KSM-K16) (Alkalihalobacillus clausii).